Consider the following 291-residue polypeptide: F-box/kelch-repeat protein At5g38670 (291 aa).

One can recognise an F-box domain in the interval Thr5 to Arg51. 4 Kelch repeats span residues Glu46–Glu91, Lys92–Gly140, Leu142–Ile187, and Lys189–Lys232.

This Arabidopsis thaliana (Mouse-ear cress) protein is F-box/kelch-repeat protein At5g38670.